The chain runs to 391 residues: Putative B3 domain-containing protein Os08g0325100 (391 aa).

The segment at residues 32–125 (GDFQHEIRGE…QFDVIIFDQV (94 aa)) is a DNA-binding region (TF-B3). Positions 143–232 (VQEGRTDATE…SSRAHPQPMP (90 aa)) are disordered. Positions 172 to 226 (EGRTNATETLNSSRAHSQPMPMQTPATETLNSSRAHSQDMPMQSPATETLNSSRA) are enriched in polar residues.

It localises to the nucleus. This Oryza sativa subsp. japonica (Rice) protein is Putative B3 domain-containing protein Os08g0325100.